A 294-amino-acid chain; its full sequence is ATP synthase gamma chain (294 aa).

The protein belongs to the ATPase gamma chain family. F-type ATPases have 2 components, CF(1) - the catalytic core - and CF(0) - the membrane proton channel. CF(1) has five subunits: alpha(3), beta(3), gamma(1), delta(1), epsilon(1). CF(0) has three main subunits: a, b and c.

The protein resides in the cell inner membrane. In terms of biological role, produces ATP from ADP in the presence of a proton gradient across the membrane. The gamma chain is believed to be important in regulating ATPase activity and the flow of protons through the CF(0) complex. This chain is ATP synthase gamma chain, found in Rhizorhabdus wittichii (strain DSM 6014 / CCUG 31198 / JCM 15750 / NBRC 105917 / EY 4224 / RW1) (Sphingomonas wittichii).